Here is a 603-residue protein sequence, read N- to C-terminus: MAASSTNARLTNPPRLLSKPRLSPTSVANLRFPAADFSTRFFADSSSPRLRSVPFPVVFSDQRRRRSMEPSNVYVASNSTEMEIGSHDIVKNPSLICAPVMADSIDKMVIETSKAHELGADLVEIRLDWLKDFNPLEDLKTIIKKSPLPTLFTYRPKWEGGQYEGDENERRDVLRLAMELGADYIDVELQVASEFIKSIDGKKPGKFKVIVSSHNYQNTPSVEDLDGLVARIQQTGADIVKIATTAVDIADVARMFHITSKAQVPTIGLVMGERGLMSRILCSKFGGYLTFGTLDSSKVSAPGQPTIKDLLDLYNFRRIGPDTKVYGIIGKPVSHSKSPIVHNQAFKSVDFNGVYVHLLVDNLVSFLQAYSSSDFAGFSCTIPHKEAALQCCDEVDPLAKSIGAVNTILRRKSDGKLLGYNTDCIGSISAIEDGLRSSGDPSSVPSSSSPLASKTVVVIGAGGAGKALAYGAKEKGAKVVIANRTYERALELAEAIGGKALSLTDLDNYHPEDGMVLANTTSMGMQPNVEETPISKDALKHYALVFDAVYTPRITRLLREAEESGAITVSGSEMFVRQAYEQFEIFTGLPAPKELYWQIMSKY.

A compositionally biased stretch (polar residues) spans 1–10 (MAASSTNARL). The interval 1–22 (MAASSTNARLTNPPRLLSKPRL) is disordered. The transit peptide at 1 to 66 (MAASSTNARL…VVFSDQRRRR (66 aa)) directs the protein to the chloroplast. The segment covering 13 to 22 (PPRLLSKPRL) has biased composition (low complexity). A 3-dehydroquinate dehydratase region spans residues 96–313 (ICAPVMADSI…QPTIKDLLDL (218 aa)). Residues E124, R126, and R155 each contribute to the 3-dehydroshikimate site. H214 functions as the Proton acceptor; for 3-dehydroquinate dehydratase activity in the catalytic mechanism. The 3-dehydroshikimate site is built by K241, R279, S300, and Q304. K241 acts as the Schiff-base intermediate with substrate; for 3-dehydroquinate dehydratase activity in catalysis. A shikimate dehydrogenase region spans residues 328–558 (IIGKPVSHSK…VYTPRITRLL (231 aa)). Residues S336, S338, T381, K385, N406, and D423 each coordinate shikimate. Catalysis depends on K385, which acts as the For shikimate dehydrogenase activity. The active-site For shikimate dehydrogenase activity is the D423. 8 residues coordinate NADP(+): A461, G463, A464, N483, T485, R488, M525, and A548. Y550 is a shikimate binding site. An NADP(+)-binding site is contributed by G571. Residues Q578 and Q582 each coordinate shikimate.

This sequence in the N-terminal section; belongs to the type-I 3-dehydroquinase family. It in the C-terminal section; belongs to the shikimate dehydrogenase family. In terms of assembly, monomer.

It localises to the plastid. The protein localises to the chloroplast. It carries out the reaction 3-dehydroquinate = 3-dehydroshikimate + H2O. The catalysed reaction is shikimate + NADP(+) = 3-dehydroshikimate + NADPH + H(+). It functions in the pathway metabolic intermediate biosynthesis; chorismate biosynthesis; chorismate from D-erythrose 4-phosphate and phosphoenolpyruvate: step 3/7. Its pathway is metabolic intermediate biosynthesis; chorismate biosynthesis; chorismate from D-erythrose 4-phosphate and phosphoenolpyruvate: step 4/7. Bifunctional dehydroquinate dehydratase-shikimate dehydrogenase enzyme that catalyzes two steps in the chorismate biosynthesis pathway. The polypeptide is Bifunctional 3-dehydroquinate dehydratase/shikimate dehydrogenase, chloroplastic (Arabidopsis thaliana (Mouse-ear cress)).